Consider the following 298-residue polypeptide: Serine/threonine-protein kinase 1 (298 aa).

Residues 38–276 (FIATRPMFEG…FKSLVSHPWF (239 aa)) form the Protein kinase domain. Residues 45–53 (FEGGRNNVF) and Lys65 contribute to the ATP site. Asp152 serves as the catalytic Proton acceptor.

Belongs to the protein kinase superfamily. Ser/Thr protein kinase family.

It localises to the virion. The protein localises to the host cytoplasm. It carries out the reaction L-seryl-[protein] + ATP = O-phospho-L-seryl-[protein] + ADP + H(+). The catalysed reaction is L-threonyl-[protein] + ATP = O-phospho-L-threonyl-[protein] + ADP + H(+). Functionally, essential for viral replication. It may mediate the virus progression through DNA replication. The chain is Serine/threonine-protein kinase 1 from African swine fever virus (strain Badajoz 1971 Vero-adapted) (Ba71V).